The following is a 60-amino-acid chain: Large ribosomal subunit protein uL30 (60 aa).

It belongs to the universal ribosomal protein uL30 family. As to quaternary structure, part of the 50S ribosomal subunit.

In Moorella thermoacetica (strain ATCC 39073 / JCM 9320), this protein is Large ribosomal subunit protein uL30.